Here is a 2207-residue protein sequence, read N- to C-terminus: Genome polyprotein (2207 aa).

Residue glycine 2 is the site of N-myristoyl glycine; by host attachment. The Cytoplasmic segment spans residues 2–1518; sequence GAQVSSQKVG…NINRAMTILQ (1517 aa). Positions 579–599 are amphipathic alpha-helix; the sequence is GLGDLIEGVVEGVTRNALTPL. A compositionally biased stretch (polar residues) spans 597–613; that stretch reads TPLTPANNLPDTQSSGP. Disordered stretches follow at residues 597–620 and 628–647; these read TPLT…KETP and GATN…VIQK. Active-site for protease 2A activity residues include histidine 899 and aspartate 917. Zn(2+) is bound by residues cysteine 934 and cysteine 936. Residue cysteine 988 is the For protease 2A activity of the active site. 2 residues coordinate Zn(2+): cysteine 994 and histidine 996. The segment at 1126–1198 is membrane-binding; that stretch reads GDSWLKKFTE…HQSCPSQEHQ (73 aa). The oligomerization stretch occupies residues 1126–1264; sequence GDSWLKKFTE…SPGTGKSVAT (139 aa). Residues 1147 to 1151 form an RNA-binding region; the sequence is SNKIS. The SF3 helicase domain maps to 1230–1386; that stretch reads EHTINNYVQF…SEYSRDGKLN (157 aa). An ATP-binding site is contributed by 1254–1261; sequence GSPGTGKS. Zn(2+)-binding residues include cysteine 1394, cysteine 1397, cysteine 1406, and cysteine 1411. The C4-type zinc finger occupies 1394-1411; the sequence is CKNCHHPANFKRCCPLVC. The tract at residues 1438–1445 is RNA-binding; that stretch reads ERNRRSSI. Positions 1449–1454 are oligomerization; sequence MEALFQ. The stretch at 1519 to 1534 is an intramembrane region; sequence AVTTFAAVAGVVYVMY. Residues 1535–2207 are Cytoplasmic-facing; that stretch reads KLFAGHQGAY…TLYRRWLDSF (673 aa). Tyrosine 1544 bears the O-(5'-phospho-RNA)-tyrosine mark. Residues 1564–1742 enclose the Peptidase C3 domain; that stretch reads GPGFDYAVAM…FAAALKRSYF (179 aa). Active-site for protease 3C activity residues include histidine 1603, glutamate 1634, and cysteine 1710. Residues 1973-2088 form the RdRp catalytic domain; the sequence is EKLFAFDYTG…SYPHEVDASL (116 aa). 2 residues coordinate Mg(2+): aspartate 1979 and aspartate 2074.

Belongs to the picornaviruses polyprotein family. In terms of assembly, interacts with capsid protein VP1 and capsid protein VP3 to form heterotrimeric protomers. Interacts with capsid protein VP0, and capsid protein VP3 to form heterotrimeric protomers. Interacts with human PVR. Five protomers subsequently associate to form pentamers which serve as building blocks for the capsid. Interacts with capsid protein VP2, capsid protein VP3 and capsid protein VP4 following cleavage of capsid protein VP0. As to quaternary structure, interacts with capsid protein VP1 and capsid protein VP3 in the mature capsid. In terms of assembly, interacts with capsid protein VP0 and capsid protein VP1 to form heterotrimeric protomers. Five protomers subsequently associate to form pentamers which serve as building blocks for the capsid. Interacts with capsid protein VP4 in the mature capsid. Interacts with protein 2C; this interaction may be important for virion morphogenesis. Interacts with capsid protein VP1 and capsid protein VP3. As to quaternary structure, homodimer. In terms of assembly, homohexamer; forms a hexameric ring structure with 6-fold symmetry characteristic of AAA+ ATPases. Interacts (via N-terminus) with host RTN3 (via reticulon domain); this interaction is important for viral replication. Interacts with capsid protein VP3; this interaction may be important for virion morphogenesis. Interacts with protein 3CD. As to quaternary structure, homodimer. Interacts with host GBF1. Interacts (via GOLD domain) with host ACBD3 (via GOLD domain); this interaction allows the formation of a viral protein 3A/ACBD3 heterotetramer with a 2:2 stoichiometry, which will stimulate the recruitment of host PI4KB in order to synthesize PI4P at the viral RNA replication sites. In terms of assembly, interacts with RNA-directed RNA polymerase. Interacts with protein 3AB and with RNA-directed RNA polymerase. As to quaternary structure, interacts with Viral protein genome-linked and with protein 3CD. Mg(2+) is required as a cofactor. Post-translationally, specific enzymatic cleavages in vivo by the viral proteases yield processing intermediates and the mature proteins. Myristoylation is required for the formation of pentamers during virus assembly. Further assembly of 12 pentamers and a molecule of genomic RNA generates the provirion. In terms of processing, during virion maturation, immature virions are rendered infectious following cleavage of VP0 into VP4 and VP2. This maturation seems to be an autocatalytic event triggered by the presence of RNA in the capsid and it is followed by a conformational change infectious virion. Post-translationally, myristoylation is required during RNA encapsidation and formation of the mature virus particle. VPg is uridylylated by the polymerase into VPg-pUpU. This acts as a nucleotide-peptide primer for the genomic RNA replication.

The protein resides in the virion. It is found in the host cytoplasm. It localises to the host cytoplasmic vesicle membrane. Its subcellular location is the host nucleus. The catalysed reaction is a ribonucleoside 5'-triphosphate + H2O = a ribonucleoside 5'-diphosphate + phosphate + H(+). The enzyme catalyses Selective cleavage of Tyr-|-Gly bond in the picornavirus polyprotein.. It carries out the reaction RNA(n) + a ribonucleoside 5'-triphosphate = RNA(n+1) + diphosphate. It catalyses the reaction Selective cleavage of Gln-|-Gly bond in the poliovirus polyprotein. In other picornavirus reactions Glu may be substituted for Gln, and Ser or Thr for Gly.. With respect to regulation, replication or transcription is subject to high level of random mutations by the nucleotide analog ribavirin. Functionally, forms an icosahedral capsid of pseudo T=3 symmetry with capsid proteins VP2 and VP3. The capsid is 300 Angstroms in diameter, composed of 60 copies of each capsid protein and enclosing the viral positive strand RNA genome. Capsid protein VP1 mainly forms the vertices of the capsid. Capsid protein VP1 interacts with host cell receptor PVR to provide virion attachment to target host cells. This attachment induces virion internalization predominantly through clathrin- and caveolin-independent endocytosis in Hela cells and through caveolin-mediated endocytosis in brain microvascular endothelial cells. Tyrosine kinases are probably involved in the entry process. Virus binding to PVR induces increased junctional permeability and rearrangement of junctional proteins. Modulation of endothelial tight junctions, as well as cytolytic infection of endothelial cells themselves, may result in loss of endothelial integrity which may help the virus to reach the CNS. After binding to its receptor, the capsid undergoes conformational changes. Capsid protein VP1 N-terminus (that contains an amphipathic alpha-helix) and capsid protein VP4 are externalized. Together, they shape a pore in the host membrane through which viral genome is translocated to host cell cytoplasm. In terms of biological role, forms an icosahedral capsid of pseudo T=3 symmetry with capsid proteins VP2 and VP3. The capsid is 300 Angstroms in diameter, composed of 60 copies of each capsid protein and enclosing the viral positive strand RNA genome. Lies on the inner surface of the capsid shell. After binding to the host receptor, the capsid undergoes conformational changes. Capsid protein VP4 is released, Capsid protein VP1 N-terminus is externalized, and together, they shape a pore in the host membrane through which the viral genome is translocated into the host cell cytoplasm. Its function is as follows. Component of immature procapsids, which is cleaved into capsid proteins VP4 and VP2 after maturation. Allows the capsid to remain inactive before the maturation step. Functionally, cysteine protease that cleaves viral polyprotein and specific host proteins. It is responsible for the autocatalytic cleavage between the P1 and P2 regions, which is the first cleavage occurring in the polyprotein. Also cleaves the host translation initiation factor EIF4G1, in order to shut down the capped cellular mRNA translation. Inhibits the host nucleus-cytoplasm protein and RNA trafficking by cleaving host members of the nuclear pores including NUP98, NUP62 and NUP153. Counteracts stress granule formation probably by antagonizing its assembly or promoting its dissassembly. Cleaves and inhibits host IFIH1/MDA5, thereby inhibiting the type-I IFN production and the establishment of the antiviral state. Cleaves and inhibits host MAVS, thereby inhibiting the type-I IFN production and the establishment of the antiviral state. In terms of biological role, plays an essential role in the virus replication cycle by acting as a viroporin. Creates a pore in the host endoplasmic reticulum and as a consequence releases Ca2+ in the cytoplasm of infected cell. In turn, high levels of cytoplasmic calcium may trigger membrane trafficking and transport of viral ER-associated proteins to viroplasms, sites of viral genome replication. Induces and associates with structural rearrangements of intracellular membranes. Displays RNA-binding, nucleotide binding and NTPase activities. May play a role in virion morphogenesis and viral RNA encapsidation by interacting with the capsid protein VP3. Its function is as follows. Localizes the viral replication complex to the surface of membranous vesicles. Together with protein 3CD binds the Cis-Active RNA Element (CRE) which is involved in RNA synthesis initiation. Acts as a cofactor to stimulate the activity of 3D polymerase, maybe through a nucleid acid chaperone activity. Functionally, localizes the viral replication complex to the surface of membranous vesicles. It inhibits host cell endoplasmic reticulum-to-Golgi apparatus transport and causes the disassembly of the Golgi complex, possibly through GBF1 interaction. This would result in depletion of MHC, trail receptors and IFN receptors at the host cell surface. Plays an essential role in viral RNA replication by recruiting ACBD3 and PI4KB at the viral replication sites, thereby allowing the formation of the rearranged membranous structures where viral replication takes place. In terms of biological role, acts as a primer for viral RNA replication and remains covalently bound to viral genomic RNA. VPg is uridylylated prior to priming replication into VPg-pUpU. The oriI viral genomic sequence may act as a template for this. The VPg-pUpU is then used as primer on the genomic RNA poly(A) by the RNA-dependent RNA polymerase to replicate the viral genome. During genome replication, the VPg-RNA linkage is removed by the host TDP2, thereby accelerating replication. During the late stage of the replication cycle, host TDP2 is excluded from sites of viral RNA synthesis and encapsidation, allowing for the generation of progeny virions. Involved in the viral replication complex and viral polypeptide maturation. It exhibits protease activity with a specificity and catalytic efficiency that is different from protease 3C. Protein 3CD lacks polymerase activity. Protein 3CD binds to the 5'UTR of the viral genome. Its function is as follows. Major viral protease that mediates proteolytic processing of the polyprotein. Cleaves host EIF5B, contributing to host translation shutoff. Also cleaves host PABPC1, contributing to host translation shutoff. Cleaves host RIGI and thus contributes to the inhibition of type I interferon production. Cleaves host NLRP1, triggers host N-glycine-mediated degradation of the autoinhibitory NLRP1 N-terminal fragment. Inhibits the integrated stress response (ISR) in the infected cell by cleaving host G3BP1. Stress granule formation is thus inhibited, which allows protein synthesis and viral replication. Functionally, replicates the viral genomic RNA on the surface of intracellular membranes. May form linear arrays of subunits that propagate along a strong head-to-tail interaction called interface-I. Covalently attaches UMP to a tyrosine of VPg, which is used to prime RNA synthesis. The positive stranded RNA genome is first replicated at virus induced membranous vesicles, creating a dsRNA genomic replication form. This dsRNA is then used as template to synthesize positive stranded RNA genomes. ss(+)RNA genomes are either translated, replicated or encapsidated. The protein is Genome polyprotein of Homo sapiens (Human).